The sequence spans 335 residues: Galactosylgalactosylxylosylprotein 3-beta-glucuronosyltransferase 3 (335 aa).

Topologically, residues 1–7 are cytoplasmic; the sequence is MKLKLKN. The chain crosses the membrane as a helical; Signal-anchor for type II membrane protein span at residues 8–28; sequence VFLAYFLVSIAGLLYALVQLG. The Lumenal portion of the chain corresponds to 29 to 335; sequence QPCDCLPPLR…GQGSDPAIEV (307 aa). Residues 82 to 84, aspartate 113, arginine 156, arginine 161, and 194 to 196 contribute to the UDP-alpha-D-glucuronate site; these read PTY and DDD. Aspartate 196 provides a ligand contact to Mn(2+). Residues 243–252 form an interaction with galactose moiety of substrate glycoprotein region; that stretch reads WEPNRPFPLD. Glutamate 281 serves as the catalytic Proton donor/acceptor. An N-linked (GlcNAc...) asparagine glycan is attached at asparagine 300. A UDP-alpha-D-glucuronate-binding site is contributed by 308–310; the sequence is HTR. Basic and acidic residues predominate over residues 312–322; sequence EKPKMKQEEQL. The disordered stretch occupies residues 312 to 335; it reads EKPKMKQEEQLQRQGQGSDPAIEV.

It belongs to the glycosyltransferase 43 family. In terms of assembly, homodimer; disulfide-linked. Interacts with PXYLP1; the interaction increases the 2-phosphoxylose phosphatase activity of PXYLP1 during completion of linkage region formation in a B3GAT3-mediated manner. It depends on Mn(2+) as a cofactor. In terms of processing, N-glycosylated. As to expression, expressed in heart, aorta, bone, and also in osteoblasts.

It localises to the golgi apparatus membrane. Its subcellular location is the golgi apparatus. The protein localises to the cis-Golgi network. The catalysed reaction is 3-O-(beta-D-galactosyl-(1-&gt;3)-beta-D-galactosyl-(1-&gt;4)-beta-D-xylosyl)-L-seryl-[protein] + UDP-alpha-D-glucuronate = 3-O-(beta-D-GlcA-(1-&gt;3)-beta-D-Gal-(1-&gt;3)-beta-D-Gal-(1-&gt;4)-beta-D-Xyl)-L-seryl-[protein] + UDP + H(+). It participates in protein modification; protein glycosylation. Glycosaminoglycans biosynthesis. Involved in forming the linkage tetrasaccharide present in heparan sulfate and chondroitin sulfate. Transfers a glucuronic acid moiety from the uridine diphosphate-glucuronic acid (UDP-GlcUA) to the common linkage region trisaccharide Gal-beta-1,3-Gal-beta-1,4-Xyl covalently bound to a Ser residue at the glycosaminylglycan attachment site of proteoglycans. Can also play a role in the biosynthesis of l2/HNK-1 carbohydrate epitope on glycoproteins. Stimulates 2-phosphoxylose phosphatase activity of PXYLP1 in presence of uridine diphosphate-glucuronic acid (UDP-GlcUA) during completion of linkage region formation. This chain is Galactosylgalactosylxylosylprotein 3-beta-glucuronosyltransferase 3 (B3gat3), found in Mus musculus (Mouse).